The primary structure comprises 91 residues: Large ribosomal subunit protein eL43 (91 aa).

The C4-type zinc-finger motif lies at 39–60 (CPFCGKDAMRRGAVGIWNCSKC).

The protein belongs to the eukaryotic ribosomal protein eL43 family.

The polypeptide is Large ribosomal subunit protein eL43 (rpl-37a) (Ostertagia ostertagi (Brown stomach worm)).